The primary structure comprises 840 residues: Phosphatidylglycerol lysyltransferase (840 aa).

Residues 1 to 8 (MTQELKSK) are Cytoplasmic-facing. The chain crosses the membrane as a helical span at residues 9–29 (LLSFFKFIFATALFIFVIFTL). Over 30–52 (YRELSHINFKETFIQFGKINRLW) the chain is Extracellular. Residues 53-73 (LVLLFAGGGLSLILLSLYDII) form a helical membrane-spanning segment. At 74-89 (LVKALKLKMPLIRVFR) the chain is on the cytoplasmic side. A helical membrane pass occupies residues 90-110 (VSYIINALNSIIGFGGFIGAG). At 111 to 129 (VRAFVYKNYTNDTKKLVQY) the chain is on the extracellular side. The helical transmembrane segment at 130–150 (ISIILVSMLTGLSLLSILVVL) threads the bilayer. The Cytoplasmic segment spans residues 151-161 (RIFNASHMIDE). Residues 162-182 (ISWVRWILYIVALFLPIFIFY) form a helical membrane-spanning segment. At 183 to 200 (TVARPVDRNNRYMGVYCT) the chain is on the extracellular side. A helical transmembrane segment spans residues 201-221 (VVSCVEWMAAATVLYFAALIV). Over 222–229 (DIHISFMT) the chain is Cytoplasmic. A helical transmembrane segment spans residues 230-250 (FVGIFVIAALSGLVSFIPGGF). Topologically, residues 251–270 (GAFDLVVLLGLKSLGISEEK) are extracellular. The helical transmembrane segment at 271 to 291 (ILLALVLYRFAYYFVPVMIAL) threads the bilayer. At 292 to 337 (ILSSFEFGNTAKKYLDNSKYFIPVKDFTSFLRSYQKDILAKVPSFS) the chain is on the cytoplasmic side. The chain crosses the membrane as a helical span at residues 338 to 358 (LAILIFLTSIIFFINNLTIVY). Topologically, residues 359-366 (DGLYDGNH) are extracellular. The helical transmembrane segment at 367–387 (FAYYIALAIQTSACLLLILNV) threads the bilayer. Topologically, residues 388–392 (RGIYK) are cytoplasmic. Residues 393–413 (GSRRAIIYAFISIILIASATI) form a helical membrane-spanning segment. The Extracellular segment spans residues 414–415 (YT). Residues 416–436 (YASFLLLSWLIIIFVLLILAY) form a helical membrane-spanning segment. At 437-450 (QRAQVLKRPLRFKK) the chain is on the cytoplasmic side. Residues 451–471 (LAFMLLLSIFILYLNHILISG) traverse the membrane as a helical segment. Residues 472–489 (TLYALDVYHIEIDTSLLR) are Extracellular-facing. A helical transmembrane segment spans residues 490–510 (YYFWMTIVIIMLLVGVIAWLF). The Cytoplasmic segment spans residues 511–840 (DYKYKRPHHS…LKVMRVIRHK (330 aa)).

The protein belongs to the LPG synthase family.

The protein localises to the cell membrane. It catalyses the reaction L-lysyl-tRNA(Lys) + a 1,2-diacyl-sn-glycero-3-phospho-(1'-sn-glycerol) = a 1,2-diacyl-sn-glycero-3-phospho-1'-(3'-O-L-lysyl)-sn-glycerol + tRNA(Lys). Its function is as follows. Catalyzes the transfer of a lysyl group from L-lysyl-tRNA(Lys) to membrane-bound phosphatidylglycerol (PG), which produces lysylphosphatidylglycerol (LPG), a major component of the bacterial membrane with a positive net charge. LPG synthesis contributes to bacterial virulence as it is involved in the resistance mechanism against cationic antimicrobial peptides (CAMP) produces by the host's immune system (defensins, cathelicidins) and by the competing microorganisms (bacteriocins). In fact, the modification of anionic phosphatidylglycerol with positively charged L-lysine results in repulsion of the peptides. This Staphylococcus epidermidis (strain ATCC 35984 / DSM 28319 / BCRC 17069 / CCUG 31568 / BM 3577 / RP62A) protein is Phosphatidylglycerol lysyltransferase (mprF).